Here is a 141-residue protein sequence, read N- to C-terminus: Galactose-6-phosphate isomerase subunit LacA 1 (141 aa).

Belongs to the LacAB/RpiB family. As to quaternary structure, heteromultimeric protein consisting of LacA and LacB.

It carries out the reaction aldehydo-D-galactose 6-phosphate = keto-D-tagatose 6-phosphate. It participates in carbohydrate metabolism; D-galactose 6-phosphate degradation; D-tagatose 6-phosphate from D-galactose 6-phosphate: step 1/1. This is Galactose-6-phosphate isomerase subunit LacA 1 from Streptococcus pyogenes serotype M1.